Reading from the N-terminus, the 760-residue chain is Amyloid beta precursor protein binding family B member 2 (760 aa).

Phosphoserine is present on residues Ser123 and Ser160. Disordered regions lie at residues Gln177–Gly295 and Pro324–Trp351. Composition is skewed to polar residues over residues Asn212 to Pro230 and Ser261 to Pro275. The WW domain occupies Pro290–Ser322. 3 positions are modified to phosphoserine: Ser334, Ser409, and Ser412. 2 PID domains span residues Asp413–Asp580 and Thr586–Asn738.

As to quaternary structure, interacts (via C-terminus) with APP (via C-terminus). Interacts with APLP2 (via cytoplasmic domain). Expressed in the brain, retinal lens and muscle cells (at protein level).

The protein localises to the endoplasmic reticulum. It localises to the golgi apparatus. The protein resides in the early endosome. In terms of biological role, plays a role in the maintenance of lens transparency, and may also play a role in muscle cell strength. Involved in hippocampal neurite branching and neuromuscular junction formation, as a result plays a role in spatial memory functioning. Activates transcription of APP. The protein is Amyloid beta precursor protein binding family B member 2 of Mus musculus (Mouse).